The following is a 405-amino-acid chain: MSINICRDNHDPFYRYKMPPIQAKVEGRGNGIKTAVLNVADISHALNRPAPYIVKYFGFELGAQTSISVDKDRYLVNGVHEPAKLQDVLDGFINKFVLCGSCKNPETEIIITKDNDLVRDCKACGKRTPMDLRHKLSSFILKNPPDSVSGSKKKKKAATASANVRGGGLSISDIAQGKSQNAPSDGTGSSTPQHHDEDEDELSRQIKAAASTLEDIEVKDDEWAVDMSEEAIRARAKELEVNSELTQLDEYGEWILEQAGEDKENLPSDVELYKKAAELDVLNDPKIGCVLAQCLFDEDIVNEIAEHNAFFTKILVTPEYEKNFMGGIERFLGLEHKDLIPLLPKILVQLYNNDIISEEEIMRFGTKSSKKFVPKEVSKKVRRAAKPFITWLETAESDDDEEDDE.

Residue 27 to 34 (GRGNGIKT) participates in GTP binding. Positions 143 to 202 (NPPDSVSGSKKKKKAATASANVRGGGLSISDIAQGKSQNAPSDGTGSSTPQHHDEDEDEL) are disordered. Phosphoserine occurs at positions 170 and 172. Polar residues predominate over residues 177 to 192 (GKSQNAPSDGTGSSTP). Thr-191 carries the phosphothreonine modification. Ser-228 bears the Phosphoserine mark. Positions 241 to 402 (VNSELTQLDE…ETAESDDDEE (162 aa)) constitute a W2 domain. A Phosphothreonine modification is found at Thr-317. A Phosphoserine modification is found at Ser-397.

This sequence belongs to the eIF-2-beta/eIF-5 family. As to quaternary structure, monomer. The factors eIF-1, eIF-2, eIF-3, TIF5/eIF-5 and methionyl-tRNAi form a multifactor complex (MFC) that may bind to the 40S ribosome. TIF32, NIP1 and TIF5/eIF-5 comprise a minimal 40S-ribosome-binding unit. Interacts with NIP1. Interacts with SUI3.

In terms of biological role, catalyzes the hydrolysis of GTP bound to the 40S ribosomal initiation complex (40S.mRNA.Met-tRNA[F].eIF-2.GTP) with the subsequent joining of a 60S ribosomal subunit resulting in the release of eIF-2 and the guanine nucleotide. The subsequent joining of a 60S ribosomal subunit results in the formation of a functional 80S initiation complex (80S.mRNA.Met-tRNA[F]). eIF-5 is essential for cell viability. The polypeptide is Eukaryotic translation initiation factor 5 (TIF5) (Saccharomyces cerevisiae (strain ATCC 204508 / S288c) (Baker's yeast)).